The chain runs to 274 residues: Large ribosomal subunit protein uL2cz/uL2cy (274 aa).

Disordered stretches follow at residues 1–22 (MAIH…DSQV) and 225–252 (PVDH…GYPA).

Belongs to the universal ribosomal protein uL2 family. As to quaternary structure, part of the 50S ribosomal subunit.

The protein resides in the plastid. Its subcellular location is the chloroplast. This chain is Large ribosomal subunit protein uL2cz/uL2cy (rpl2-A), found in Barbarea verna (Land cress).